The chain runs to 227 residues: Transcription antitermination protein NusB (227 aa).

Disordered regions lie at residues 165–189 (ASES…SDED) and 201–227 (AEET…ADES). Acidic residues-rich tracts occupy residues 178–189 (DDSDALDDSDED) and 201–214 (AEET…AEDS). The segment covering 215 to 227 (EVSKVSEEKADES) has biased composition (basic and acidic residues).

It belongs to the NusB family.

In terms of biological role, involved in transcription antitermination. Required for transcription of ribosomal RNA (rRNA) genes. Binds specifically to the boxA antiterminator sequence of the ribosomal RNA (rrn) operons. This Corynebacterium glutamicum (strain ATCC 13032 / DSM 20300 / JCM 1318 / BCRC 11384 / CCUG 27702 / LMG 3730 / NBRC 12168 / NCIMB 10025 / NRRL B-2784 / 534) protein is Transcription antitermination protein NusB.